We begin with the raw amino-acid sequence, 367 residues long: tRNA-specific 2-thiouridylase MnmA (367 aa).

Residues 13 to 20 (GLSGGVDS) and Met39 each bind ATP. The interval 99 to 101 (NPD) is interaction with target base in tRNA. Cys104 (nucleophile) is an active-site residue. A disulfide bridge connects residues Cys104 and Cys200. Gly128 is a binding site for ATP. An interaction with tRNA region spans residues 150–152 (KDQ). Catalysis depends on Cys200, which acts as the Cysteine persulfide intermediate. Residues 307–308 (RY) form an interaction with tRNA region.

Belongs to the MnmA/TRMU family.

It localises to the cytoplasm. It catalyses the reaction S-sulfanyl-L-cysteinyl-[protein] + uridine(34) in tRNA + AH2 + ATP = 2-thiouridine(34) in tRNA + L-cysteinyl-[protein] + A + AMP + diphosphate + H(+). Catalyzes the 2-thiolation of uridine at the wobble position (U34) of tRNA, leading to the formation of s(2)U34. The sequence is that of tRNA-specific 2-thiouridylase MnmA from Neisseria meningitidis serogroup B (strain ATCC BAA-335 / MC58).